The chain runs to 301 residues: Haloalkane dehalogenase (301 aa).

An AB hydrolase-1 domain is found at Pro47 to Asp284. Asp123 functions as the Nucleophile in the catalytic mechanism. The Proton donor role is filled by Asp250. His279 acts as the Proton acceptor in catalysis.

The protein belongs to the haloalkane dehalogenase family. Type 1 subfamily. As to quaternary structure, monomer.

The enzyme catalyses 1-haloalkane + H2O = a halide anion + a primary alcohol + H(+). Functionally, catalyzes hydrolytic cleavage of carbon-halogen bonds in halogenated aliphatic compounds, leading to the formation of the corresponding primary alcohols, halide ions and protons. In Mycolicibacterium paratuberculosis (strain ATCC BAA-968 / K-10) (Mycobacterium paratuberculosis), this protein is Haloalkane dehalogenase.